The chain runs to 115 residues: Large ribosomal subunit protein bL19 (115 aa).

The protein belongs to the bacterial ribosomal protein bL19 family.

In terms of biological role, this protein is located at the 30S-50S ribosomal subunit interface and may play a role in the structure and function of the aminoacyl-tRNA binding site. The protein is Large ribosomal subunit protein bL19 of Streptococcus pyogenes serotype M2 (strain MGAS10270).